The chain runs to 83 residues: Probable calcium-binding protein CML28 (83 aa).

2 consecutive EF-hand domains span residues 5–40 (TEKA…LGSV) and 43–75 (EDIK…NRGL). Residues aspartate 18, asparagine 20, aspartate 22, lysine 24, glutamate 29, aspartate 53, aspartate 55, aspartate 57, tyrosine 59, and glutamate 64 each contribute to the Ca(2+) site.

Potential calcium sensor. The polypeptide is Probable calcium-binding protein CML28 (CML28) (Arabidopsis thaliana (Mouse-ear cress)).